The sequence spans 302 residues: Sulfate adenylyltransferase subunit 2 (302 aa).

The protein belongs to the PAPS reductase family. CysD subfamily. In terms of assembly, heterodimer composed of CysD, the smaller subunit, and CysN.

It catalyses the reaction sulfate + ATP + H(+) = adenosine 5'-phosphosulfate + diphosphate. It participates in sulfur metabolism; hydrogen sulfide biosynthesis; sulfite from sulfate: step 1/3. Its function is as follows. With CysN forms the ATP sulfurylase (ATPS) that catalyzes the adenylation of sulfate producing adenosine 5'-phosphosulfate (APS) and diphosphate, the first enzymatic step in sulfur assimilation pathway. APS synthesis involves the formation of a high-energy phosphoric-sulfuric acid anhydride bond driven by GTP hydrolysis by CysN coupled to ATP hydrolysis by CysD. The protein is Sulfate adenylyltransferase subunit 2 of Klebsiella pneumoniae (strain 342).